The following is a 262-amino-acid chain: Sepiapterin reductase (262 aa).

Met1 is modified (N-acetylmethionine). NADP(+)-binding positions include 15 to 21 (GASRGFG) and 43 to 44 (RS). Phosphoserine is present on Ser46. 70–71 (DL) contacts NADP(+). Residues 158-159 (SL) and Tyr171 each bind substrate. Lys175 contacts NADP(+). The residue at position 196 (Ser196) is a Phosphoserine. Gly200 is a substrate binding site. 202-207 (LDTDMQ) contributes to the NADP(+) binding site. Position 214 is a phosphoserine (Ser214). Asp258 contacts substrate.

The protein belongs to the sepiapterin reductase family. As to quaternary structure, homodimer.

The protein localises to the cytoplasm. It carries out the reaction L-erythro-7,8-dihydrobiopterin + NADP(+) = L-sepiapterin + NADPH + H(+). The enzyme catalyses (6R)-L-erythro-5,6,7,8-tetrahydrobiopterin + 2 NADP(+) = 6-pyruvoyl-5,6,7,8-tetrahydropterin + 2 NADPH + 2 H(+). It catalyses the reaction (S)-benzoin + NADP(+) = benzil + NADPH + H(+). Functionally, catalyzes the final one or two reductions in tetra-hydrobiopterin biosynthesis to form 5,6,7,8-tetrahydrobiopterin. The enzyme also catalyzes the reduction of benzil to (S)-benzoin. This is Sepiapterin reductase (SPR) from Meriones unguiculatus (Mongolian jird).